Consider the following 400-residue polypeptide: Cytohesin-2 (400 aa).

Residues 10–63 (DLTPEERMELENIRRRKQELLVEIQRLREELSEAMSEVEGLEANEGSKTLQRNR) adopt a coiled-coil conformation. The region spanning 72–201 (FNMDPKKGIQ…VIMLNTSLHN (130 aa)) is the SEC7 domain. A PH domain is found at 259 to 376 (NPDREGWLLK…WIKSIQAAVS (118 aa)). Residues 268 to 276 (KLGGGRVKT), arginine 280, tyrosine 291, arginine 301, lysine 339, asparagine 350, and histidine 351 each bind a 1,2-diacyl-sn-glycero-3-phospho-(1D-myo-inositol-3,4,5-trisphosphate). The interval 387–395 (RKKRISVKK) is C-terminal autoinhibitory region.

Heteromer. Composed of TAMALIN, CYTH2 and at least one GRM1. Interacts with ARRB1. Interacts with ARL4D; the interaction is direct. Directly interacts with CCDC120 through the coiled coil domain; this interaction stabilizes CCDC120, possibly by preventing its ubiquitination, and is required for neurite growth in neuroblastoma cells. Interacts with ARF1. Interacts with FRMD4A. Interacts (via N-terminal domain) with INAVA (via N-terminal domain). In terms of tissue distribution, widely expressed.

It localises to the cell membrane. The protein resides in the cytoplasm. Its subcellular location is the cell projection. The protein localises to the growth cone. It is found in the cell junction. It localises to the tight junction. The protein resides in the adherens junction. Acts as a guanine-nucleotide exchange factor (GEF). Promotes guanine-nucleotide exchange on ARF1, ARF3 and ARF6. Activates ARF factors through replacement of GDP with GTP. The cell membrane form, in association with ARL4 proteins, recruits ARF6 to the plasma membrane. Involved in neurite growth. The chain is Cytohesin-2 from Homo sapiens (Human).